Consider the following 37-residue polypeptide: Large ribosomal subunit protein bL36 (37 aa).

Belongs to the bacterial ribosomal protein bL36 family.

This is Large ribosomal subunit protein bL36 from Trichlorobacter lovleyi (strain ATCC BAA-1151 / DSM 17278 / SZ) (Geobacter lovleyi).